Here is a 136-residue protein sequence, read N- to C-terminus: Large ribosomal subunit protein uL16 (136 aa).

It belongs to the universal ribosomal protein uL16 family. Part of the 50S ribosomal subunit.

Its function is as follows. Binds 23S rRNA and is also seen to make contacts with the A and possibly P site tRNAs. The sequence is that of Large ribosomal subunit protein uL16 from Mannheimia succiniciproducens (strain KCTC 0769BP / MBEL55E).